Here is a 241-residue protein sequence, read N- to C-terminus: Small ribosomal subunit protein uS3 (241 aa).

Positions 22–91 (VDEYLAYKFH…NPQVTVVKVE (70 aa)) constitute a KH type-2 domain. The tract at residues 218–241 (EMQQTQPEAPTLEETVEQSGGETQ) is disordered.

This sequence belongs to the universal ribosomal protein uS3 family. As to quaternary structure, part of the 30S ribosomal subunit.

Its function is as follows. Binds the lower part of the 30S subunit head. The sequence is that of Small ribosomal subunit protein uS3 from Ignicoccus hospitalis (strain KIN4/I / DSM 18386 / JCM 14125).